The primary structure comprises 266 residues: CD82 antigen (266 aa).

Residues 1–11 are Cytoplasmic-facing; that stretch reads MGAGCVKVTKY. Cysteine 5 carries the S-palmitoyl cysteine lipid modification. A helical transmembrane segment spans residues 12 to 32; it reads FLFLFNLLFFILGAVILGFGV. The Extracellular segment spans residues 33-53; sequence WILADKNSFISVLQTSSSSLQ. The helical transmembrane segment at 54–72 threads the bilayer; the sequence is VGAYVFIGVGAITIVMGFL. Topologically, residues 73–83 are cytoplasmic; the sequence is GCIGAVNEVRC. Cysteine 74 carries the S-palmitoyl cysteine lipid modification. The chain crosses the membrane as a helical span at residues 84–110; sequence LLGLYFVFLLLILIAQVTVGVLFYFNA. Topologically, residues 111-227 are extracellular; sequence DKLKKEMGNT…KAQAWLQENF (117 aa). Residues asparagine 127, asparagine 131, asparagine 157, and asparagine 197 are each glycosylated (N-linked (GlcNAc...) asparagine). The helical transmembrane segment at 228-249 threads the bilayer; sequence GILLGVCAGVAVIELLGLFLSI. Residues 250-266 are Cytoplasmic-facing; sequence CLCRYIHSEDYSKVPKY.

The protein belongs to the tetraspanin (TM4SF) family. In terms of assembly, forms homooligomers. Interacts directly with IGSF8. Interacts with EGFR. Interacts with VEGFA and PDGFA. Interacts with ITGA4. Interacts with ITGA6; this interaction reduces ITGA6 cell surface expression. Interacts with ITGB1. Interacts with TLR4; this interaction inhibits TLR4-mediated signaling pathway. Interacts with TLR9. Interacts with PLAUR. In terms of processing, palmitoylated. Palmitoylation contributes to oligomerization and surface expression. As to expression, highest expression in the spleen and the kidney. Low expression in skeletal muscle and in the heart.

It is found in the cell membrane. The protein resides in the cytoplasmic vesicle. It localises to the phagosome. Structural component of specialized membrane microdomains known as tetraspanin-enriched microdomains (TERMs), which act as platforms for receptor clustering and signaling. Participates thereby in diverse biological functions such as cell signal transduction, adhesion, migration and protein trafficking. Acts as a attenuator of EGF signaling, facilitating ligand-induced endocytosis of the receptor and its subsequent desensitization. Mechanistically, modulates ligand-induced ubiquitination and trafficking of EGFR via E3 ligase CBL phosphorylation by PKC. Increases cell-matrix adhesion by regulating the membrane organization of integrin alpha4/ITA4. Modulates adhesion and suppresses cell migration through other integrins such as the alpha6/ITGA6 and beta1/ITGB1. Decreases cell-associated plasminogen activation by interfering with the interaction between urokinase-type plasminogen activator/PLAU and its receptor PLAUR. Associates with CD4 or CD8 and delivers costimulatory signals for the TCR/CD3 pathway. Plays a role in the restrains phagocyte migration but supports macrophage activation. Plays a role in TLR9 trafficking to acidified CpG-containing compartments by controlling interaction between TLR9 and VAMP3 and subsequent myddosome assembly. Inhibits LPS-induced inflammatory response by preventing binding of LPS to TLR4 on the cell surface. Plays a role in the activation of macrophages into anti-inflammatory phenotypes. Independently of Toll-like receptor (TLR) signaling, is recruited to pathogen-containing phagosomes prior to fusion with lysosomes and participates in antigen presentation. Also acts to control angiogenesis and switch angiogenic milieu to quiescent state by binding and sequestering VEGFA and PDGFA to inhibit the signaling they trigger via their respective cell surface receptor. This Mus musculus (Mouse) protein is CD82 antigen (Cd82).